The sequence spans 2111 residues: Glutamate synthase [NADH] (2111 aa).

The active-site Nucleophile is the cysteine 69. Residues 69–469 enclose the Glutamine amidotransferase type-2 domain; it reads CGVGFTCHIK…PGRMLLVDTK (401 aa). The interval 969–990 is disordered; sequence GGKSNTGEGGEDPARSQRLANG. FMN is bound at residue 1139 to 1191; that stretch reads VAETHQTLVLNDLRGRVVIQTDGQIRTGRDVAIACLLGAEEWGFATTPLIALG. [3Fe-4S] cluster-binding residues include cysteine 1192, cysteine 1198, and cysteine 1203.

This sequence belongs to the glutamate synthase family. Homotrimer. [3Fe-4S] cluster is required as a cofactor. FAD serves as cofactor. It depends on FMN as a cofactor.

The protein resides in the cytoplasm. The catalysed reaction is 2 L-glutamate + NAD(+) = L-glutamine + 2-oxoglutarate + NADH + H(+). The protein operates within amino-acid biosynthesis; L-glutamate biosynthesis via GLT pathway; L-glutamate from 2-oxoglutarate and L-glutamine (NAD(+) route): step 1/1. It participates in energy metabolism; nitrogen metabolism. Its activity is regulated as follows. In the presence of 10 mM allantoin, the activity is reduced more than 25%. Forms L-glutamate from L-glutamine and 2-oxoglutarate. Represents an alternative pathway to L-glutamate dehydrogenase for the biosynthesis of L-glutamate. Participates with glutamine synthetase in ammonia assimilation processes. The enzyme is specific for NADH, L-glutamine and 2-oxoglutarate. The protein is Glutamate synthase [NADH] (glt1) of Schizosaccharomyces pombe (strain 972 / ATCC 24843) (Fission yeast).